The chain runs to 494 residues: Beta-glucosidase 29 (494 aa).

A signal peptide spans 1 to 28; sequence MAWLGIGMGRQIVPVLVFVAVLCSGVDA. Residue glutamine 49 participates in a beta-D-glucoside binding. N-linked (GlcNAc...) asparagine glycosylation occurs at asparagine 103. A beta-D-glucoside contacts are provided by residues histidine 138 and 183 to 184; that span reads NE. Residue glutamate 184 is the Proton donor of the active site. A disulfide bond links cysteine 203 and cysteine 211. N-linked (GlcNAc...) asparagine glycosylation is present at asparagine 263. An a beta-D-glucoside-binding site is contributed by tyrosine 327. Asparagine 352 carries an N-linked (GlcNAc...) asparagine glycan. Glutamate 398 contacts a beta-D-glucoside. Catalysis depends on glutamate 398, which acts as the Nucleophile. An N-linked (GlcNAc...) asparagine glycan is attached at asparagine 406. A beta-D-glucoside-binding positions include tryptophan 447, 454-455, and phenylalanine 463; that span reads EW.

This sequence belongs to the glycosyl hydrolase 1 family.

The catalysed reaction is Hydrolysis of terminal, non-reducing beta-D-glucosyl residues with release of beta-D-glucose.. This chain is Beta-glucosidase 29 (BGLU29), found in Oryza sativa subsp. japonica (Rice).